The primary structure comprises 171 residues: MKILGIDPGSRITGYGVISKEGNRLIHVDNGAIFTDKAKDFPARLERIYRGLAEIIETYRPDAVAVENIFFSNNVQSALKLGQARGAAIVAGVIAGLPVFEYTALQVKQAVVGNGKAAKQQVQQMIKVLLNLPEIAQEDASDALAVAVCHANSSVLSGMLKIMDKVGKTNA.

Residues D7, E67, and D139 contribute to the active site. Residues D7, E67, and D139 each coordinate Mg(2+).

It belongs to the RuvC family. As to quaternary structure, homodimer which binds Holliday junction (HJ) DNA. The HJ becomes 2-fold symmetrical on binding to RuvC with unstacked arms; it has a different conformation from HJ DNA in complex with RuvA. In the full resolvosome a probable DNA-RuvA(4)-RuvB(12)-RuvC(2) complex forms which resolves the HJ. The cofactor is Mg(2+).

The protein resides in the cytoplasm. The catalysed reaction is Endonucleolytic cleavage at a junction such as a reciprocal single-stranded crossover between two homologous DNA duplexes (Holliday junction).. In terms of biological role, the RuvA-RuvB-RuvC complex processes Holliday junction (HJ) DNA during genetic recombination and DNA repair. Endonuclease that resolves HJ intermediates. Cleaves cruciform DNA by making single-stranded nicks across the HJ at symmetrical positions within the homologous arms, yielding a 5'-phosphate and a 3'-hydroxyl group; requires a central core of homology in the junction. The consensus cleavage sequence is 5'-(A/T)TT(C/G)-3'. Cleavage occurs on the 3'-side of the TT dinucleotide at the point of strand exchange. HJ branch migration catalyzed by RuvA-RuvB allows RuvC to scan DNA until it finds its consensus sequence, where it cleaves and resolves the cruciform DNA. In Geotalea uraniireducens (strain Rf4) (Geobacter uraniireducens), this protein is Crossover junction endodeoxyribonuclease RuvC.